An 802-amino-acid chain; its full sequence is Lon protease (802 aa).

The region spanning 17 to 211 (SIVMPLFEVV…LFLHILTKHK (195 aa)) is the Lon N-terminal domain. Residue 363 to 370 (GPPGTGKT) participates in ATP binding. Positions 600 to 780 (ENVPGVVTGL…EEVLREALDI (181 aa)) constitute a Lon proteolytic domain. Residues S686 and K729 contribute to the active site.

It belongs to the peptidase S16 family. In terms of assembly, homohexamer. Organized in a ring with a central cavity.

It is found in the cytoplasm. It catalyses the reaction Hydrolysis of proteins in presence of ATP.. In terms of biological role, ATP-dependent serine protease that mediates the selective degradation of mutant and abnormal proteins as well as certain short-lived regulatory proteins. Required for cellular homeostasis and for survival from DNA damage and developmental changes induced by stress. Degrades polypeptides processively to yield small peptide fragments that are 5 to 10 amino acids long. Binds to DNA in a double-stranded, site-specific manner. This chain is Lon protease, found in Methanosarcina barkeri (strain Fusaro / DSM 804).